The chain runs to 292 residues: ATP synthase gamma chain (292 aa).

The protein belongs to the ATPase gamma chain family. In terms of assembly, F-type ATPases have 2 components, CF(1) - the catalytic core - and CF(0) - the membrane proton channel. CF(1) has five subunits: alpha(3), beta(3), gamma(1), delta(1), epsilon(1). CF(0) has three main subunits: a, b and c.

It localises to the cell inner membrane. Its function is as follows. Produces ATP from ADP in the presence of a proton gradient across the membrane. The gamma chain is believed to be important in regulating ATPase activity and the flow of protons through the CF(0) complex. The chain is ATP synthase gamma chain from Bradyrhizobium sp. (strain ORS 278).